Consider the following 169-residue polypeptide: Cell division inhibitor SulA (169 aa).

The ftsZ binding stretch occupies residues A106 to Y112. Residues K162–H169 form a lon protease binding region.

This sequence belongs to the SulA family. As to quaternary structure, interacts with FtsZ. Post-translationally, is rapidly cleaved and degraded by the Lon protease once DNA damage is repaired.

Its function is as follows. Component of the SOS system and an inhibitor of cell division. Accumulation of SulA causes rapid cessation of cell division and the appearance of long, non-septate filaments. In the presence of GTP, binds a polymerization-competent form of FtsZ in a 1:1 ratio, thus inhibiting FtsZ polymerization and therefore preventing it from participating in the assembly of the Z ring. This mechanism prevents the premature segregation of damaged DNA to daughter cells during cell division. The polypeptide is Cell division inhibitor SulA (Salmonella arizonae (strain ATCC BAA-731 / CDC346-86 / RSK2980)).